The chain runs to 179 residues: UPF0227 protein VIBHAR_01524 (179 aa).

This sequence belongs to the UPF0227 family.

In Vibrio campbellii (strain ATCC BAA-1116), this protein is UPF0227 protein VIBHAR_01524.